We begin with the raw amino-acid sequence, 66 residues long: Toxin Os1 (66 aa).

Residues 2-66 enclose the LCN-type CS-alpha/beta domain; that stretch reads RDGYIVQLHN…PIKWLDPKCY (65 aa). 4 disulfides stabilise this stretch: cysteine 12/cysteine 65, cysteine 16/cysteine 37, cysteine 22/cysteine 47, and cysteine 26/cysteine 49.

Belongs to the long (4 C-C) scorpion toxin superfamily. Sodium channel inhibitor family. Alpha subfamily. As to expression, expressed by the venom gland.

It localises to the secreted. Alpha toxins bind voltage-independently at site-3 of sodium channels (Nav) and inhibit the inactivation of the activated channels, thereby blocking neuronal transmission. This toxin possesses a high paralytic activity against mice. The protein is Toxin Os1 of Orthochirus scrobiculosus (Central Asian scorpion).